A 309-amino-acid polypeptide reads, in one-letter code: Mitochondrial brown fat uncoupling protein 1 (309 aa).

Topologically, residues 2–10 (VGHTESDVP) are mitochondrial intermembrane. A helical transmembrane segment spans residues 11 to 32 (PTMAVKIFSAGVAACVADIITF). Solcar repeat units follow at residues 11–106 (PTMA…VQEF), 113–203 (ASLG…MKEA), and 212–297 (DDVP…LKQE). Over 33 to 77 (PLDTAKVRLQVGSAIQGECLISSAIRYKGVLGTIITLAKTEGPVK) the chain is Mitochondrial matrix. Position 60 (K60) interacts with fatty acid 16:0. A helical transmembrane segment spans residues 78–100 (LYSGLPAGLQRQISFASLRIGLY). Residues 101 to 118 (DTVQEFFTTGKEASLGSK) lie on the Mitochondrial intermembrane side of the membrane. The chain crosses the membrane as a helical span at residues 119–135 (ISAGLMTGGVAVFIGQP). Residues 136–180 (TEVVKVRLQAQSHLHGPKPRYTGTYNAYRIIATTEGLTGLWKGTT) lie on the Mitochondrial matrix side of the membrane. A helical membrane pass occupies residues 181-197 (PNLTRNVIINCTELVTY). Topologically, residues 198–214 (DLMKEALVKNKLLADDV) are mitochondrial intermembrane. A helical membrane pass occupies residues 215–234 (PCHFVSAVVAGFCTTVLSSP). Residues 235-268 (VDVVKTRFVNSSPGQYTSVPNCAMMMLTREGPSA) lie on the Mitochondrial matrix side of the membrane. Cysteine sulfenic acid (-SOH) is present on C256. Residues 269–291 (FFKGFVPSFLRLGSWNIIMFVCF) traverse the membrane as a helical segment. K271 is a binding site for fatty acid 16:0. At 292-309 (EQLKQELMKSRHTMDCAT) the chain is on the mitochondrial intermembrane side.

This sequence belongs to the mitochondrial carrier (TC 2.A.29) family. In terms of assembly, most probably functions as a monomer. Binds one purine nucleotide per monomer. However, has also been suggested to function as a homodimer or a homotetramer. Tightly associates with cardiolipin in the mitochondrion inner membrane; may stabilize and regulate its activity. In terms of processing, may undergo sulfenylation upon cold exposure. May increase the sensitivity of UCP1 thermogenic function to the activation by noradrenaline probably through structural effects. May undergo ubiquitin-mediated proteasomal degradation.

The protein localises to the mitochondrion inner membrane. The enzyme catalyses H(+)(in) = H(+)(out). With respect to regulation, has no constitutive proton transporter activity and has to be activated by long-chain fatty acids/LCFAs. Inhibited by purine nucleotides. Both purine nucleotides and LCFAs bind the cytosolic side of the transporter and directly compete to activate or inhibit it. Activated by noradrenaline and reactive oxygen species. Despite lacking canonical translational encoding for selenocysteine, a small pool of the protein has been observed to selectively incorporate selenocysteine at 'Cys-256'. Selenocysteine-modified protein is highly sensitive to redox modification and may constitute a pool of protein highly sensitive to activation by elevated levels of reactive oxygen species (ROS). Mitochondrial protein responsible for thermogenic respiration, a specialized capacity of brown adipose tissue and beige fat that participates in non-shivering adaptive thermogenesis to temperature and diet variations and more generally to the regulation of energy balance. Functions as a long-chain fatty acid/LCFA and proton symporter, simultaneously transporting one LCFA and one proton through the inner mitochondrial membrane. However, LCFAs remaining associated with the transporter via their hydrophobic tails, it results in an apparent transport of protons activated by LCFAs. Thereby, dissipates the mitochondrial proton gradient and converts the energy of substrate oxydation into heat instead of ATP. Regulates the production of reactive oxygen species/ROS by mitochondria. This chain is Mitochondrial brown fat uncoupling protein 1, found in Bos taurus (Bovine).